A 310-amino-acid chain; its full sequence is Apolipoprotein E (310 aa).

An N-terminal signal peptide occupies residues 1–18; that stretch reads MKVLWAALVVTLLAGCQA. 4 tandem repeats follow at residues 77 to 98, 99 to 120, 121 to 142, and 143 to 164. The tract at residues 77–248 is 8 X 22 AA approximate tandem repeats; that stretch reads ALMEETMKEV…RLDEVREQVQ (172 aa). M140 carries the methionine sulfoxide modification. S144 carries the phosphoserine modification. The tract at residues 155–165 is LDL and other lipoprotein receptors binding; the sequence is HLRKLRKRLLR. 159 to 162 provides a ligand contact to heparin; sequence LRKR. The segment at residues 165 to 186 is a repeat; that stretch reads RDAEDLQKRLAVYQAGIREGAE. 3 tandem repeats follow at residues 187–204, 205–226, and 227–248. The lipid-binding and lipoprotein association stretch occupies residues 203 to 283; the sequence is AATVRSLISK…SWFEPLVQDM (81 aa). A heparin-binding site is contributed by 222–229; it reads GQRLRGRL. Residues 259-310 are homooligomerization; the sequence is NQMRLQAEAFHARLKSWFEPLVQDMQQKWAELVEKVQLAVGTSPTSESSEKQ. The segment at 271–283 is specificity for association with VLDL; the sequence is RLKSWFEPLVQDM.

It belongs to the apolipoprotein A1/A4/E family. As to quaternary structure, homotetramer. May interact with ABCA1; functionally associated with ABCA1 in the biogenesis of HDLs. May interact with APP/A4 amyloid-beta peptide; the interaction is extremely stable in vitro but its physiological significance is unclear. May interact with MAPT. May interact with MAP2. In the cerebrospinal fluid, interacts with secreted SORL1. Interacts with PMEL; this allows the loading of PMEL luminal fragment on ILVs to induce fibril nucleation. Post-translationally, APOE exists as multiple glycosylated and sialylated glycoforms within cells and in plasma. The extent of glycosylation and sialylation are tissue and context specific. Glycated in plasma VLDL. In terms of processing, phosphorylated by FAM20C in the extracellular medium.

It localises to the secreted. The protein resides in the extracellular space. Its subcellular location is the extracellular matrix. The protein localises to the extracellular vesicle. It is found in the endosome. It localises to the multivesicular body. Functionally, APOE is an apolipoprotein, a protein associating with lipid particles, that mainly functions in lipoprotein-mediated lipid transport between organs via the plasma and interstitial fluids. APOE is a core component of plasma lipoproteins and is involved in their production, conversion and clearance. Apolipoproteins are amphipathic molecules that interact both with lipids of the lipoprotein particle core and the aqueous environment of the plasma. As such, APOE associates with chylomicrons, chylomicron remnants, very low density lipoproteins (VLDL) and intermediate density lipoproteins (IDL) but shows a preferential binding to high-density lipoproteins (HDL). It also binds a wide range of cellular receptors including the LDL receptor/LDLR, the LDL receptor-related proteins LRP1, LRP2 and LRP8 and the very low-density lipoprotein receptor/VLDLR that mediate the cellular uptake of the APOE-containing lipoprotein particles. Finally, APOE also has a heparin-binding activity and binds heparan-sulfate proteoglycans on the surface of cells, a property that supports the capture and the receptor-mediated uptake of APOE-containing lipoproteins by cells. A main function of APOE is to mediate lipoprotein clearance through the uptake of chylomicrons, VLDLs, and HDLs by hepatocytes. APOE is also involved in the biosynthesis by the liver of VLDLs as well as their uptake by peripheral tissues ensuring the delivery of triglycerides and energy storage in muscle, heart and adipose tissues. By participating in the lipoprotein-mediated distribution of lipids among tissues, APOE plays a critical role in plasma and tissues lipid homeostasis. APOE is also involved in two steps of reverse cholesterol transport, the HDLs-mediated transport of cholesterol from peripheral tissues to the liver, and thereby plays an important role in cholesterol homeostasis. First, it is functionally associated with ABCA1 in the biogenesis of HDLs in tissues. Second, it is enriched in circulating HDLs and mediates their uptake by hepatocytes. APOE also plays an important role in lipid transport in the central nervous system, regulating neuron survival and sprouting. The chain is Apolipoprotein E (APOE) from Tapirus terrestris (Lowland tapir).